Here is a 367-residue protein sequence, read N- to C-terminus: MKEPLDLSKYSVRTDLAVEAHQMLQERQEEQKGIQGVIVKEREEEGVTITKVTIDEIASESMGKKPGSYLTLEVQGIRQQDTELQQKVERIFAKEFSYFLEEVGVSKEASCLIVGLGNWNVTPDALGPIVVENVLVTRHLFKLQPESVEEGFRPVSAIRPGVMGITGIETSDVIYGIIEKTKPDFVIAIDALAARSIERVNSTIQISDTGIHPGSGVGNKRKELSKETLGIPVIAIGVPTVVDAVSITSDTIDFILKHFGRELKEGNKPSRSLLPAGFTFGEKKKLTEEDMPDEKSRNMFLGAIGTLEEEEKRKLIYEVLSPLGHNLMVTPKEVDAFIEDMANVIASGLNAALHHQIDQDNTGAYTH.

The propeptide occupies 1 to 15 (MKEPLDLSKYSVRTD).

It belongs to the peptidase A25 family. In terms of assembly, homotetramer. Autoproteolytically processed. The inactive tetrameric zymogen termed p46 autoprocesses to a smaller form termed p41, which is active only during spore germination.

The enzyme catalyses Endopeptidase action with P4 Glu or Asp, P1 preferably Glu &gt; Asp, P1' hydrophobic and P2' Ala.. Functionally, initiates the rapid degradation of small, acid-soluble proteins during spore germination. In Bacillus mycoides (strain KBAB4) (Bacillus weihenstephanensis), this protein is Germination protease.